The primary structure comprises 484 residues: MARAIMLQGTGSDVGKTVLVAGLCRLAANRGLAVRPFKPQNMSNNAAVADDGGEIGRAQWLQSLAARAPSSVHMNPVLLKPQSENGSQIIVQGRVFGQSKGRDYQRLKPQLLGAVLESFEKVAAGADLVIVEGAGSPAEINLRAGDIANMGFATRAGVPVVLVGDIDRGGVIASLVGTHAILDDGDRAMIAGYIINKFRGDISLFDDGIRAIEGFTGWPCFGVVPWLPGAARLPAEDSVVLERLAKGRAGALKIAVPVLPRIANFDDLDPLRAEPDVELVFVRSGERLPADASLVILPGSKSTISDLADFRAEGWDRDLHMHVRRGGRVIGICGGYQMLGRTVRDRLGIEGGTLETPGLALLDVETEMAPEKTVRNSHARSTEYDVPLAGYQIHLGITHGPDCDRPSAIVDGVPDGALSADGRIVGTYLHGLFGSDAYRTRLLQSFGLSGERRNYRESVEQALDEIAGELERYLDPRWLAGLLG.

A GATase cobBQ-type domain is found at 251 to 438 (ALKIAVPVLP…LHGLFGSDAY (188 aa)). The Nucleophile role is filled by Cys-333. His-430 is an active-site residue.

The protein belongs to the CobB/CobQ family. CobQ subfamily.

It participates in cofactor biosynthesis; adenosylcobalamin biosynthesis. Its function is as follows. Catalyzes amidations at positions B, D, E, and G on adenosylcobyrinic A,C-diamide. NH(2) groups are provided by glutamine, and one molecule of ATP is hydrogenolyzed for each amidation. In Rhizobium leguminosarum bv. trifolii (strain WSM2304), this protein is Cobyric acid synthase.